The following is a 327-amino-acid chain: DNA-directed RNA polymerase subunit alpha (327 aa).

Positions 1–233 (MVREKVKVST…NLFIPFLHVE (233 aa)) are alpha N-terminal domain (alpha-NTD). The tract at residues 267–327 (LAFQYIFIDQ…KKILDILEKK (61 aa)) is alpha C-terminal domain (alpha-CTD).

Belongs to the RNA polymerase alpha chain family. As to quaternary structure, in plastids the minimal PEP RNA polymerase catalytic core is composed of four subunits: alpha, beta, beta', and beta''. When a (nuclear-encoded) sigma factor is associated with the core the holoenzyme is formed, which can initiate transcription.

It localises to the plastid. The protein localises to the chloroplast. The catalysed reaction is RNA(n) + a ribonucleoside 5'-triphosphate = RNA(n+1) + diphosphate. DNA-dependent RNA polymerase catalyzes the transcription of DNA into RNA using the four ribonucleoside triphosphates as substrates. This Nasturtium officinale (Watercress) protein is DNA-directed RNA polymerase subunit alpha.